Consider the following 308-residue polypeptide: N-acetylmuramic acid 6-phosphate etherase (308 aa).

Positions 62 to 225 (ITDAFKVGGR…TTASMIRLGK (164 aa)) constitute an SIS domain. Glutamate 90 functions as the Proton donor in the catalytic mechanism. Residue glutamate 121 is part of the active site.

Belongs to the GCKR-like family. MurNAc-6-P etherase subfamily. As to quaternary structure, homodimer.

The enzyme catalyses N-acetyl-D-muramate 6-phosphate + H2O = N-acetyl-D-glucosamine 6-phosphate + (R)-lactate. The protein operates within amino-sugar metabolism; 1,6-anhydro-N-acetylmuramate degradation. It functions in the pathway amino-sugar metabolism; N-acetylmuramate degradation. It participates in cell wall biogenesis; peptidoglycan recycling. In terms of biological role, specifically catalyzes the cleavage of the D-lactyl ether substituent of MurNAc 6-phosphate, producing GlcNAc 6-phosphate and D-lactate. Together with AnmK, is also required for the utilization of anhydro-N-acetylmuramic acid (anhMurNAc) either imported from the medium or derived from its own cell wall murein, and thus plays a role in cell wall recycling. This is N-acetylmuramic acid 6-phosphate etherase from Vibrio campbellii (strain ATCC BAA-1116).